The chain runs to 830 residues: Periplasmic nitrate reductase (830 aa).

Residues 1–30 (MTTRREFIKRSAAVTAACTAGISLSGEASN) constitute a signal peptide (tat-type signal). A 4Fe-4S Mo/W bis-MGD-type domain is found at 40–96 (LKWSKAPCRFCGTGCSVNVAVKDNQVVATHGDIQSEVNRGLNCVKGYFLSKIMYGKD). [4Fe-4S] cluster contacts are provided by cysteine 47, cysteine 50, cysteine 54, and cysteine 82. Mo-bis(molybdopterin guanine dinucleotide) is bound by residues lysine 84, glutamine 151, asparagine 176, cysteine 180, 213–220 (WGSNMAEM), 244–248 (STFQH), methionine 374, glutamine 378, asparagine 484, 510–511 (SE), lysine 533, aspartate 560, and 720–729 (TGRVLEHWHS). Tryptophan 796 contacts substrate. Residues asparagine 804 and lysine 821 each contribute to the Mo-bis(molybdopterin guanine dinucleotide) site.

Belongs to the prokaryotic molybdopterin-containing oxidoreductase family. NasA/NapA/NarB subfamily. Component of the periplasmic nitrate reductase NapAB complex composed of NapA and NapB. [4Fe-4S] cluster serves as cofactor. Requires Mo-bis(molybdopterin guanine dinucleotide) as cofactor. Predicted to be exported by the Tat system. The position of the signal peptide cleavage has not been experimentally proven.

Its subcellular location is the periplasm. The catalysed reaction is 2 Fe(II)-[cytochrome] + nitrate + 2 H(+) = 2 Fe(III)-[cytochrome] + nitrite + H2O. Its function is as follows. Catalytic subunit of the periplasmic nitrate reductase complex NapAB. Receives electrons from NapB and catalyzes the reduction of nitrate to nitrite. The protein is Periplasmic nitrate reductase of Hahella chejuensis (strain KCTC 2396).